Consider the following 103-residue polypeptide: 6-pyruvoyl tetrahydrobiopterin synthase (103 aa).

Alanine 1 is subject to N-acetylalanine. Histidine 27 is a Zn(2+) binding site. Residues histidine 53 and glutamate 92 each act as charge relay system in the active site.

Belongs to the PTPS family. In terms of assembly, homohexamer formed of two homotrimers in a head to head fashion. Requires Zn(2+) as cofactor.

It catalyses the reaction 7,8-dihydroneopterin 3'-triphosphate = 6-pyruvoyl-5,6,7,8-tetrahydropterin + triphosphate + H(+). Its pathway is cofactor biosynthesis; tetrahydrobiopterin biosynthesis; tetrahydrobiopterin from 7,8-dihydroneopterin triphosphate: step 1/3. Involved in the biosynthesis of tetrahydrobiopterin, an essential cofactor of aromatic amino acid hydroxylases. Catalyzes the transformation of 7,8-dihydroneopterin triphosphate into 6-pyruvoyl tetrahydropterin. This Salmo salar (Atlantic salmon) protein is 6-pyruvoyl tetrahydrobiopterin synthase (pts).